We begin with the raw amino-acid sequence, 400 residues long: NADH-ubiquinone oxidoreductase 49 kDa subunit (400 aa).

It belongs to the complex I 49 kDa subunit family.

It is found in the mitochondrion. It catalyses the reaction a ubiquinone + NADH + 5 H(+)(in) = a ubiquinol + NAD(+) + 4 H(+)(out). Core subunit of the mitochondrial membrane respiratory chain NADH dehydrogenase (Complex I) that is believed to belong to the minimal assembly required for catalysis. Complex I functions in the transfer of electrons from NADH to the respiratory chain. The immediate electron acceptor for the enzyme is believed to be ubiquinone. Component of the iron-sulfur (IP) fragment of the enzyme. Component of the iron-sulfur (IP) fragment of the enzyme. The polypeptide is NADH-ubiquinone oxidoreductase 49 kDa subunit (NAD7) (Paramecium tetraurelia).